The primary structure comprises 166 residues: Phosphopantetheine adenylyltransferase (166 aa).

Ser-8 contributes to the substrate binding site. Residues 8–9 (SF) and His-16 each bind ATP. Substrate contacts are provided by Lys-40, Thr-72, and Arg-86. ATP-binding positions include 87-89 (GLR), Glu-97, and 122-128 (YSFLSSS).

This sequence belongs to the bacterial CoaD family. Homohexamer. Mg(2+) serves as cofactor.

The protein resides in the cytoplasm. The enzyme catalyses (R)-4'-phosphopantetheine + ATP + H(+) = 3'-dephospho-CoA + diphosphate. Its pathway is cofactor biosynthesis; coenzyme A biosynthesis; CoA from (R)-pantothenate: step 4/5. Functionally, reversibly transfers an adenylyl group from ATP to 4'-phosphopantetheine, yielding dephospho-CoA (dPCoA) and pyrophosphate. In Synechococcus elongatus (strain ATCC 33912 / PCC 7942 / FACHB-805) (Anacystis nidulans R2), this protein is Phosphopantetheine adenylyltransferase.